The chain runs to 209 residues: uncharacterized protein (209 aa).

It belongs to the flavoredoxin family. It depends on FMN as a cofactor.

This is an uncharacterized protein from Halalkalibacterium halodurans (strain ATCC BAA-125 / DSM 18197 / FERM 7344 / JCM 9153 / C-125) (Bacillus halodurans).